The sequence spans 283 residues: Putative UTP--glucose-1-phosphate uridylyltransferase (283 aa).

The protein belongs to the UDPGP type 2 family.

The enzyme catalyses alpha-D-glucose 1-phosphate + UTP + H(+) = UDP-alpha-D-glucose + diphosphate. The sequence is that of Putative UTP--glucose-1-phosphate uridylyltransferase from Methanocaldococcus jannaschii (strain ATCC 43067 / DSM 2661 / JAL-1 / JCM 10045 / NBRC 100440) (Methanococcus jannaschii).